The chain runs to 146 residues: MKLHELRPAEGSRKSPKRVGRGTGSGLGKTSARGENGQNSRSGGGVRPGFEGGQMPLYRRLPKRGFTNIFAKKYTAINIDRLNIFEDDTVVTPELLIEKGVISKVYDGVKILGNGELDKKLIVKATKFSKAAAEKIEAAGGKVEVI.

Over residues 1–13 the composition is skewed to basic and acidic residues; it reads MKLHELRPAEGSR. Residues 1-55 are disordered; sequence MKLHELRPAEGSRKSPKRVGRGTGSGLGKTSARGENGQNSRSGGGVRPGFEGGQM. Residues 42–52 show a composition bias toward gly residues; the sequence is SGGGVRPGFEG.

This sequence belongs to the universal ribosomal protein uL15 family. As to quaternary structure, part of the 50S ribosomal subunit.

Its function is as follows. Binds to the 23S rRNA. The protein is Large ribosomal subunit protein uL15 of Clostridium tetani (strain Massachusetts / E88).